A 116-amino-acid chain; its full sequence is MNKEIIEVFDNTFPNRDYTIEIVNPEFTSVCPKTGLPDFGTITITYVPDKSCIELKSLKYYFLEFRNAGIFYENITNTILDHLVEACQPKSMTVKTDWNARGGITETVTVSYTAEK.

Residue cysteine 31 is the Thioimide intermediate of the active site. Aspartate 38 serves as the catalytic Proton donor. Substrate is bound by residues 53–55 and 72–73; these read IEL and YE.

This sequence belongs to the GTP cyclohydrolase I family. QueF type 1 subfamily.

It localises to the cytoplasm. It carries out the reaction 7-aminomethyl-7-carbaguanine + 2 NADP(+) = 7-cyano-7-deazaguanine + 2 NADPH + 3 H(+). It participates in tRNA modification; tRNA-queuosine biosynthesis. Catalyzes the NADPH-dependent reduction of 7-cyano-7-deazaguanine (preQ0) to 7-aminomethyl-7-deazaguanine (preQ1). The sequence is that of NADPH-dependent 7-cyano-7-deazaguanine reductase from Chlorobaculum parvum (strain DSM 263 / NCIMB 8327) (Chlorobium vibrioforme subsp. thiosulfatophilum).